Consider the following 247-residue polypeptide: Opacity protein opA52 (247 aa).

A1 is a signal peptide.

It belongs to the opacity porin family.

The protein localises to the cell outer membrane. Its function is as follows. Implicated in a number of adherence functions. OPA proteins are implicated in pathogenesis and are subject to phase variation. The sequence is that of Opacity protein opA52 (opaG) from Neisseria gonorrhoeae.